The primary structure comprises 384 residues: MTNPIIAFQNVSKVFEDSGTQVLKDINFELEEGKFYTLLGASGSGKSTILNIIAGLLDATSGDVLLDGKRINDIPINKRDVHTVFQSYALFPHMNVFDNVAFALKLKKVPKKEIEERVKEALKMVQLDGYQKRSIQKLSGGQRQRVAIARAIINQPRVVLLDEPLSALDLKLRTEMQYELRELQKRLGITFVFVTHDQEEALAMSDWIFVMNDGEIVQSGTPVDIYDEPINHFVATFIGESNILPGVMIEDYLVEFNGKRFESVDGGMRPNEPVEVVIRPEDLQITLPEEGKLQVRVETQLFRGVHYEIIAYDNLGNEWMIHSTRKAIEGEIIGLDFMPEDIHIMRLNETEEEFDARIEEYVEMEEPEDGLIHAIEEERHEENS.

Residues 6–238 (IAFQNVSKVF…PINHFVATFI (233 aa)) enclose the ABC transporter domain. 40–47 (GASGSGKS) contacts ATP.

This sequence belongs to the ABC transporter superfamily. Spermidine/putrescine importer (TC 3.A.1.11.1) family. As to quaternary structure, the complex is composed of two ATP-binding proteins (PotA), two transmembrane proteins (PotB and PotC) and a solute-binding protein (PotD).

It localises to the cell membrane. It catalyses the reaction ATP + H2O + polyamine-[polyamine-binding protein]Side 1 = ADP + phosphate + polyamineSide 2 + [polyamine-binding protein]Side 1.. In terms of biological role, part of the ABC transporter complex PotABCD involved in spermidine/putrescine import. Responsible for energy coupling to the transport system. The protein is Spermidine/putrescine import ATP-binding protein PotA of Streptococcus thermophilus (strain ATCC BAA-250 / LMG 18311).